Here is a 391-residue protein sequence, read N- to C-terminus: Glutamate 5-kinase (391 aa).

An ATP-binding site is contributed by Lys17. 3 residues coordinate substrate: Ser57, Asp144, and Asn156. Residues 176 to 177 (SD) and 216 to 222 (TGGMTTK) each bind ATP. A PUA domain is found at 278 to 356 (QGQIVIDDGA…AWLAAEMGPA (79 aa)). The disordered stretch occupies residues 370–391 (SRRRKAEPSSRNQKSSGSRVTS). Positions 378–391 (SSRNQKSSGSRVTS) are enriched in polar residues.

The protein belongs to the glutamate 5-kinase family.

Its subcellular location is the cytoplasm. The enzyme catalyses L-glutamate + ATP = L-glutamyl 5-phosphate + ADP. Its pathway is amino-acid biosynthesis; L-proline biosynthesis; L-glutamate 5-semialdehyde from L-glutamate: step 1/2. Catalyzes the transfer of a phosphate group to glutamate to form L-glutamate 5-phosphate. The chain is Glutamate 5-kinase from Cutibacterium acnes (strain DSM 16379 / KPA171202) (Propionibacterium acnes).